Reading from the N-terminus, the 1026-residue chain is Multidrug resistance protein MdtC (1026 aa).

Over 1-6 (MRFFAL) the chain is Cytoplasmic. Residues 7–29 (FIYRPVATILIAAAITLCGILGF) traverse the membrane as a helical segment. At 30-335 (RLLPVAPLPQ…TIRASLQEVE (306 aa)) the chain is on the periplasmic side. A helical membrane pass occupies residues 336-353 (ETLAISVALVILVVFLFL). Over 354-359 (RSGRAT) the chain is Cytoplasmic. A helical transmembrane segment spans residues 360 to 379 (LIPAVAVPVSLIGTFAAMYL). Residues 380–388 (CGFSLNNLS) lie on the Periplasmic side of the membrane. A helical membrane pass occupies residues 389 to 411 (LMALTIATGFVVDDAIVVLENIA). Over 412-430 (RHLEARMKPLQAALQGTRE) the chain is Cytoplasmic. Residues 431–453 (VGFTVISMSLSLVAVFLPLLLMG) form a helical membrane-spanning segment. Topologically, residues 454–467 (GLPGRLLREFAVTL) are periplasmic. The chain crosses the membrane as a helical span at residues 468-490 (SVAIGISLVVSLTLTPMMCGWML). The Cytoplasmic segment spans residues 491–852 (KSSKPRTQPR…QVFQQTMNSQ (362 aa)). A helical transmembrane segment spans residues 853 to 875 (LILIVAAIATVYIVLGILYESYV). At 876 to 894 (HPLTILSTLPSAGVGALLA) the chain is on the periplasmic side. Residues 895–917 (LELFNAPFSLIALIGIMLLIGIV) traverse the membrane as a helical segment. The Cytoplasmic segment spans residues 918-947 (KKNAIMMVDFALEAQRSGGLTPEQAIFQAC). Residues 948–970 (LLRFRPIMMTTLAALFGALPLVL) form a helical membrane-spanning segment. The Periplasmic portion of the chain corresponds to 971 to 984 (SGGDGSELRQPLGI). A helical membrane pass occupies residues 985-1007 (TIVGGLVMSQLLTLYTTPVVYLF). Residues 1008-1026 (FDRLRLRFSRKNSKPVVEI) are Cytoplasmic-facing.

This sequence belongs to the resistance-nodulation-cell division (RND) (TC 2.A.6) family. MdtC subfamily. In terms of assembly, part of a tripartite efflux system composed of MdtA, MdtB and MdtC. MdtC forms a heteromultimer with MdtB.

It localises to the cell inner membrane. This Salmonella typhi protein is Multidrug resistance protein MdtC.